The sequence spans 513 residues: Zinc finger protein 395 (513 aa).

Positions 17-29 (ARVLGPSASEGPS) are enriched in low complexity. The interval 17 to 56 (ARVLGPSASEGPSAAPPSEPLLEGAAPQPFTTSDDTPCQE) is disordered. Positions 45–55 (PFTTSDDTPCQ) are enriched in polar residues. The short motif at 165 to 174 (MDEMMAAMVL) is the Nuclear export signal element. The disordered stretch occupies residues 204-269 (KESGDISDSG…DPFLLDEPAP (66 aa)). The span at 209–229 (ISDSGSSTTSGHWSGSSGVST) shows a compositional bias: low complexity. S248 bears the Phosphoserine mark. The segment at 280–305 (YKCLWPNCGKVLRSIVGIKRHVKALH) adopts a C2H2-type zinc-finger fold. Residues 335–394 (AAAAAAAGTPVPGTPTSEPAPTPSMTGLPLSALPPPLHKAQSSGPEHPGPESSLPSGALS) form a disordered region. Over residues 348–359 (TPTSEPAPTPSM) the composition is skewed to polar residues. Residues S376 and S449 each carry the phosphoserine modification. A compositionally biased stretch (low complexity) spans 376-391 (SSGPEHPGPESSLPSG).

As to quaternary structure, interacts with repression-mediating E2 binding site P2 of human papillomavirus type 8 (HPV8). As to expression, widely expressed.

The protein localises to the cytoplasm. Its subcellular location is the nucleus. Plays a role in papillomavirus genes transcription. The chain is Zinc finger protein 395 (ZNF395) from Homo sapiens (Human).